Here is a 117-residue protein sequence, read N- to C-terminus: UPF0102 protein Spro_4337 (117 aa).

This sequence belongs to the UPF0102 family.

The chain is UPF0102 protein Spro_4337 from Serratia proteamaculans (strain 568).